A 239-amino-acid chain; its full sequence is MTLLTPDQLEAQLRQIGAERYHNRHPFHRKLHDGKLDKAQVQAWALNRYYYQARIPAKDATLLARLPTAELRREWRRRIEDHDGTEPGTGGVARWLMLTDGLGLDRDYVESLDGLLPATRFSVDAYVNFVRDQSILAAIASSLTELFSPTIISERVSGMLRHYDFVSEKTLAYFTPRLTQAPRDSDFALAYVREKARTPEQQKEVLGALEFKCSVLWTMLDALDYAYVEGHIPPGAFVP.

This sequence belongs to the PqqC family.

It carries out the reaction 6-(2-amino-2-carboxyethyl)-7,8-dioxo-1,2,3,4,7,8-hexahydroquinoline-2,4-dicarboxylate + 3 O2 = pyrroloquinoline quinone + 2 H2O2 + 2 H2O + H(+). It participates in cofactor biosynthesis; pyrroloquinoline quinone biosynthesis. Ring cyclization and eight-electron oxidation of 3a-(2-amino-2-carboxyethyl)-4,5-dioxo-4,5,6,7,8,9-hexahydroquinoline-7,9-dicarboxylic-acid to PQQ. The polypeptide is Pyrroloquinoline-quinone synthase (Gluconobacter oxydans (strain 621H) (Gluconobacter suboxydans)).